The following is a 908-amino-acid chain: Flap endonuclease GEN homolog 1 (908 aa).

The interval 2 to 96 (GVNDLWQILE…SKRTQTRYGP (95 aa)) is XPG-N domain. Mg(2+) is bound by residues D30, E75, E134, E136, D155, D157, and D208. The interval 122–208 (ECLGMPWVQA…VGLAVLLGCD (87 aa)) is XPG-I domain. The 5'-3' exonuclease domain stretch occupies residues 208–383 (DYLPKGVPGV…LLVLLTRYDM (176 aa)). A chromodomain region spans residues 389–463 (GRKTSNQLQP…VYQKQLSETK (75 aa)). 4 disordered regions span residues 460–482 (SETK…LPEA), 629–650 (YESE…QSNP), 792–834 (RDSS…NKLR), and 853–886 (AEDE…SWEN). Over residues 465–476 (RKQKSMKNKPKG) the composition is skewed to basic residues. 2 positions are modified to phosphoserine: S794 and S795. The span at 824–834 (HVRDSTHNKLR) shows a compositional bias: basic and acidic residues.

Belongs to the XPG/RAD2 endonuclease family. GEN subfamily. Largely monomeric, dimerizes on the Holliday junction and the first nick occurs upon dimerization at the junction. The cofactor is Mg(2+). As to expression, expressed in bone marrow and testis and to a lesser extent in thymus, spleen, brain and colon.

The protein resides in the nucleus. Its function is as follows. Endonuclease which resolves Holliday junctions (HJs) by the introduction of symmetrically related cuts across the junction point, to produce nicked duplex products in which the nicks can be readily ligated. Four-way DNA intermediates, also known as Holliday junctions, are formed during homologous recombination and DNA repair, and their resolution is necessary for proper chromosome segregation. Cleaves HJs by a nick and counter-nick mechanism involving dual coordinated incisions that lead to the formation of ligatable nicked duplex products. Cleavage of the first strand is rate limiting, while second strand cleavage is rapid. Largely monomeric, dimerizes on the HJ and the first nick occurs upon dimerization at the junction. Efficiently cleaves both single and double HJs contained within large recombination intermediates. Exhibits a weak sequence preference for incision between two G residues that reside in a T-rich region of DNA. Also has endonuclease activity on 5'-flap and replication fork (RF) DNA substrates. This is Flap endonuclease GEN homolog 1 (Gen1) from Mus musculus (Mouse).